The primary structure comprises 369 residues: DNA replication and repair protein RecF (369 aa).

Residue 30-37 (GDNGSGKT) participates in ATP binding.

The protein belongs to the RecF family.

The protein resides in the cytoplasm. Its function is as follows. The RecF protein is involved in DNA metabolism; it is required for DNA replication and normal SOS inducibility. RecF binds preferentially to single-stranded, linear DNA. It also seems to bind ATP. The polypeptide is DNA replication and repair protein RecF (Pseudomonas aeruginosa (strain UCBPP-PA14)).